Here is a 408-residue protein sequence, read N- to C-terminus: Putative UPF0496 protein 2 (408 aa).

The next 2 helical transmembrane spans lie at 224–244 (RIARGTAAAALVGACAAAIVA) and 252–272 (ALVGIGVAAAAFGATPAGAAR). Positions 385–408 (MARGLPPPSPATVTTTSEERLTSS) are disordered.

Belongs to the UPF0496 family.

The protein localises to the membrane. The polypeptide is Putative UPF0496 protein 2 (Oryza sativa subsp. indica (Rice)).